We begin with the raw amino-acid sequence, 497 residues long: Probable malate:quinone oxidoreductase (497 aa).

It belongs to the MQO family. Requires FAD as cofactor.

It catalyses the reaction (S)-malate + a quinone = a quinol + oxaloacetate. The protein operates within carbohydrate metabolism; tricarboxylic acid cycle; oxaloacetate from (S)-malate (quinone route): step 1/1. The polypeptide is Probable malate:quinone oxidoreductase (Bacillus cereus (strain ATCC 14579 / DSM 31 / CCUG 7414 / JCM 2152 / NBRC 15305 / NCIMB 9373 / NCTC 2599 / NRRL B-3711)).